The sequence spans 545 residues: 1,3-beta-glucanosyltransferase ARB_07487 (545 aa).

The first 19 residues, 1–19 (MKFSSLAAATALVAGSVVA), serve as a signal peptide directing secretion. Residues Asn51 and Asn69 are each glycosylated (N-linked (GlcNAc...) asparagine). Residues Cys88 and Cys117 are joined by a disulfide bond. Residues Tyr106, 133 to 141 (SEPSTSIIR), Asn174, and Glu175 each bind (1,3-beta-D-glucosyl)n. The active-site Proton donor is Glu175. Residue Asn179 is glycosylated (N-linked (GlcNAc...) asparagine). Residues Asp216 and Arg221 each coordinate (1,3-beta-D-glucosyl)n. Intrachain disulfides connect Cys230–Cys363, Cys248–Cys279, Cys384–Cys437, Cys393–Cys464, and Cys412–Cys419. Residue Glu276 is the Nucleophile of the active site. Residue Tyr308 participates in (1,3-beta-D-glucosyl)n binding. The segment at 493–513 (GTGSVTSAPGSGGNKPDQGAA) is disordered. Ala512 is lipidated: GPI-anchor amidated alanine. Residues 513–545 (ASTISAPSVNLGIVKLGAYIFCAVLAGAGMILI) constitute a propeptide, removed in mature form.

The protein belongs to the glycosyl hydrolase 72 family. Post-translationally, the GPI-anchor is attached to the protein in the endoplasmic reticulum and serves to target the protein to the cell surface. There, the glucosamine-inositol phospholipid moiety is cleaved off and the GPI-modified mannoprotein is covalently attached via its lipidless GPI glycan remnant to the 1,6-beta-glucan of the outer cell wall layer.

It localises to the secreted. It is found in the cell membrane. Its subcellular location is the cell wall. Functionally, splits internally a 1,3-beta-glucan molecule and transfers the newly generated reducing end (the donor) to the non-reducing end of another 1,3-beta-glucan molecule (the acceptor) forming a 1,3-beta linkage, resulting in the elongation of 1,3-beta-glucan chains in the cell wall. Involved in cell wall biosynthesis and morphogenesis. In Arthroderma benhamiae (strain ATCC MYA-4681 / CBS 112371) (Trichophyton mentagrophytes), this protein is 1,3-beta-glucanosyltransferase ARB_07487.